The sequence spans 118 residues: UPF0102 protein ROP_66030 (118 aa).

This sequence belongs to the UPF0102 family.

This chain is UPF0102 protein ROP_66030, found in Rhodococcus opacus (strain B4).